A 272-amino-acid polypeptide reads, in one-letter code: Nitrogenase iron protein (272 aa).

ATP is bound at residue 8-15; the sequence is GKGGIGKS. C94 is a [4Fe-4S] cluster binding site. R97 is subject to ADP-ribosylarginine; by dinitrogenase reductase ADP-ribosyltransferase. C129 is a binding site for [4Fe-4S] cluster.

This sequence belongs to the NifH/BchL/ChlL family. In terms of assembly, homodimer. [4Fe-4S] cluster is required as a cofactor. Post-translationally, the reversible ADP-ribosylation of Arg-97 inactivates the nitrogenase reductase and regulates nitrogenase activity.

The enzyme catalyses N2 + 8 reduced [2Fe-2S]-[ferredoxin] + 16 ATP + 16 H2O = H2 + 8 oxidized [2Fe-2S]-[ferredoxin] + 2 NH4(+) + 16 ADP + 16 phosphate + 6 H(+). In terms of biological role, the key enzymatic reactions in nitrogen fixation are catalyzed by the nitrogenase complex, which has 2 components: the iron protein and the molybdenum-iron protein. The chain is Nitrogenase iron protein from Clostridium acetobutylicum (strain ATCC 824 / DSM 792 / JCM 1419 / IAM 19013 / LMG 5710 / NBRC 13948 / NRRL B-527 / VKM B-1787 / 2291 / W).